Here is an 80-residue protein sequence, read N- to C-terminus: Metallothionein-like protein type 2, MT2-22 (80 aa).

The protein belongs to the metallothionein superfamily. Type 15 family.

In terms of biological role, metallothioneins have a high content of cysteine residues that bind various heavy metals. The chain is Metallothionein-like protein type 2, MT2-22 from Brassica juncea (Indian mustard).